The sequence spans 122 residues: UPF0382 membrane protein SAUSA300_0565 (122 aa).

Transmembrane regions (helical) follow at residues 3-23 (LFII…AFGA), 46-66 (MYHG…SINV), 69-89 (AGWL…ILVL), and 98-118 (ITPI…IATF).

This sequence belongs to the UPF0382 family.

It localises to the cell membrane. In Staphylococcus aureus (strain USA300), this protein is UPF0382 membrane protein SAUSA300_0565.